The sequence spans 74 residues: U4-theraphotoxin-Cg1a (74 aa).

Residues M1–A19 form the signal peptide. Positions T20–R39 are excised as a propeptide. 3 disulfide bridges follow: C42/C56, C49/C61, and C55/C71.

It belongs to the neurotoxin 36 family. 01 subfamily. In terms of tissue distribution, expressed by the venom gland.

The protein resides in the secreted. Functionally, probable ion channel inhibitor. The protein is U4-theraphotoxin-Cg1a of Chilobrachys guangxiensis (Chinese earth tiger tarantula).